Reading from the N-terminus, the 349-residue chain is 4-hydroxythreonine-4-phosphate dehydrogenase (349 aa).

Residues His141 and Thr142 each coordinate substrate. Residues His176, His221, and His276 each coordinate a divalent metal cation. Substrate-binding residues include Lys284, Asn293, and Arg302.

The protein belongs to the PdxA family. As to quaternary structure, homodimer. It depends on Zn(2+) as a cofactor. Requires Mg(2+) as cofactor. Co(2+) serves as cofactor.

It localises to the cytoplasm. The catalysed reaction is 4-(phosphooxy)-L-threonine + NAD(+) = 3-amino-2-oxopropyl phosphate + CO2 + NADH. It participates in cofactor biosynthesis; pyridoxine 5'-phosphate biosynthesis; pyridoxine 5'-phosphate from D-erythrose 4-phosphate: step 4/5. Functionally, catalyzes the NAD(P)-dependent oxidation of 4-(phosphooxy)-L-threonine (HTP) into 2-amino-3-oxo-4-(phosphooxy)butyric acid which spontaneously decarboxylates to form 3-amino-2-oxopropyl phosphate (AHAP). This chain is 4-hydroxythreonine-4-phosphate dehydrogenase, found in Methylorubrum extorquens (strain PA1) (Methylobacterium extorquens).